The following is a 637-amino-acid chain: MRSSWADSVANAEESAPATGAAPTPVANHQNSRPTRSAYVPPHLRGQAPTTTAAPAPAPGPAAVQPSASVQPSGYAAIVGGSRWAGPASGDGTGAVGGPRQSVGGRGGGGGGGGGWNSRPGWDRRDREPNPFANSEAEEATEVDFDTANTGINFDAYEDIPVETSGHDVPPPVNTFAEIDLGDALNENIRRCKYVKPTPVQRYAIPISIAGRDLMACAQTGSGKTAAFCFPIISGIMSSRPPQRPRGSRTAYPLALILSPTRELSVQIHEEARKFAYQTGVRVVVAYGGAPIHQQLRELERGVEILVATPGRLMDLLERARVSLQMVKYLALDEADRMLDMGFEPQIRKIVEQMDMPPRGVRQTMLFSATFPKEIQRMASDFLADYIFLAVGRVGSSTDLIAQRVEFVLEADKRSYLMDLLHAQKANGTHGKQALTLVFVETKRGADALENWLYTNGFPATSIHGDRTQQEREYALRSFKSGATPILVATDVAARGLDIPHVAHVINFDLPNDIDDYVHRIGRTGRAGKSGLATAFFNEGNLSLARPLCELMQEANQEVPQWLERYSARSSFGGGGGRNRRSGGARFGGRDFRRDNRGGGGGGYGGGGGGYGGGGYGGGGGYGGGYGGGQGSTSSWD.

Disordered regions lie at residues 1–68 (MRSS…QPSA) and 86–141 (GPAS…EEAT). 2 stretches are compositionally biased toward low complexity: residues 10–28 (ANAEESAPATGAAPTPVAN) and 46–68 (GQAPTTTAAPAPAPGPAAVQPSA). Positions 104-116 (GGRGGGGGGGGGW) are enriched in gly residues. A Q motif motif is present at residues 174-202 (NTFAEIDLGDALNENIRRCKYVKPTPVQR). The Helicase ATP-binding domain maps to 205 to 389 (IPISIAGRDL…SDFLADYIFL (185 aa)). 218-225 (AQTGSGKT) contacts ATP. The DEAD box signature appears at 333–336 (DEAD). The 152-residue stretch at 416–567 (YLMDLLHAQK…EVPQWLERYS (152 aa)) folds into the Helicase C-terminal domain. The tract at residues 570 to 610 (SSFGGGGGRNRRSGGARFGGRDFRRDNRGGGGGGYGGGGGG) is disordered. Basic and acidic residues predominate over residues 588 to 597 (GGRDFRRDNR). The segment covering 598–610 (GGGGGGYGGGGGG) has biased composition (gly residues).

It belongs to the DEAD box helicase family. DDX3/DED1 subfamily.

The catalysed reaction is ATP + H2O = ADP + phosphate + H(+). The polypeptide is DEAD-box ATP-dependent RNA helicase 37 (PL10A) (Oryza sativa subsp. japonica (Rice)).